The sequence spans 474 residues: Photosystem II CP43 reaction center protein (474 aa).

Residues 1–14 (MKTLYSLRRFYPVE) constitute a propeptide that is removed on maturation. N-acetylthreonine is present on Thr15. Thr15 is modified (phosphothreonine). The next 5 helical transmembrane spans lie at 69–93 (LFEVAHFVPEKPMYEQGLILLPHLA), 134–155 (LLGPETLEESFPFFGYVWKDRN), 178–201 (KALYFGGVYDTWAPGGGEMLRKIT), 256–276 (KPFAWARRALVWSGEAYLSYS), and 292–313 (WFNNTAYPSEFYGPTGPEASQA). Glu368 provides a ligand contact to [CaMn4O5] cluster. A helical transmembrane segment spans residues 448-472 (RARAAAAGFEKGIDRDFEPVLSMTP).

Belongs to the PsbB/PsbC family. PsbC subfamily. In terms of assembly, PSII is composed of 1 copy each of membrane proteins PsbA, PsbB, PsbC, PsbD, PsbE, PsbF, PsbH, PsbI, PsbJ, PsbK, PsbL, PsbM, PsbT, PsbX, PsbY, PsbZ, Psb30/Ycf12, at least 3 peripheral proteins of the oxygen-evolving complex and a large number of cofactors. It forms dimeric complexes. The cofactor is Binds multiple chlorophylls and provides some of the ligands for the Ca-4Mn-5O cluster of the oxygen-evolving complex. It may also provide a ligand for a Cl- that is required for oxygen evolution. PSII binds additional chlorophylls, carotenoids and specific lipids..

It is found in the plastid. The protein localises to the chloroplast thylakoid membrane. In terms of biological role, one of the components of the core complex of photosystem II (PSII). It binds chlorophyll and helps catalyze the primary light-induced photochemical processes of PSII. PSII is a light-driven water:plastoquinone oxidoreductase, using light energy to abstract electrons from H(2)O, generating O(2) and a proton gradient subsequently used for ATP formation. The protein is Photosystem II CP43 reaction center protein of Citrus sinensis (Sweet orange).